We begin with the raw amino-acid sequence, 315 residues long: Glutathione synthetase (315 aa).

In terms of domain architecture, ATP-grasp spans 125-310 (KLYTAWFADL…ITGMLMDAIE (186 aa)). Position 151-207 (151-207 (WEKHGDIIMKPLDGMGGASIFRVKEGDPNIGVIAETLTELGNRYCMAQNYLPAIKDG)) interacts with ATP. Mg(2+)-binding residues include E281 and N283.

This sequence belongs to the prokaryotic GSH synthase family. Mg(2+) is required as a cofactor. The cofactor is Mn(2+).

It carries out the reaction gamma-L-glutamyl-L-cysteine + glycine + ATP = glutathione + ADP + phosphate + H(+). It participates in sulfur metabolism; glutathione biosynthesis; glutathione from L-cysteine and L-glutamate: step 2/2. The protein is Glutathione synthetase of Salmonella typhi.